A 651-amino-acid polypeptide reads, in one-letter code: p-hydroxybenzoic acid efflux pump subunit AaeB (651 aa).

Transmembrane regions (helical) follow at residues 11-31 (FACK…WFEM), 41-61 (AAIV…SGAI), 65-85 (GLLR…IIMT), 91-111 (VVML…SSLV), 117-137 (YVFA…QSSP), 150-170 (EIIL…PRSV), 367-387 (LFWL…LGVV), 404-424 (FLIG…LVLP), 428-448 (QSLL…GIEI), 454-474 (GSLG…PMTF), and 480-500 (LDNA…IMLI).

The protein belongs to the aromatic acid exporter ArAE (TC 2.A.85) family.

The protein localises to the cell inner membrane. In terms of biological role, forms an efflux pump with AaeA. Could function as a metabolic relief valve, allowing to eliminate certain compounds when they accumulate to high levels in the cell. In Musicola paradisiaca (strain Ech703) (Dickeya paradisiaca), this protein is p-hydroxybenzoic acid efflux pump subunit AaeB.